Reading from the N-terminus, the 304-residue chain is D-tagatose-1-phosphate kinase (304 aa).

The active-site Proton acceptor is Asp-250.

The protein belongs to the carbohydrate kinase PfkB family. It depends on Mg(2+) as a cofactor.

It carries out the reaction alpha-D-tagatopyranose 1-phosphate + ATP = D-tagatofuranose 1,6-bisphosphate + ADP + H(+). The protein operates within carbohydrate degradation. With respect to regulation, activity is inhibited by tagatose-6-phosphate and fructose-6-phosphate. In terms of biological role, kinase involved in a D-tagatose catabolic pathway. Catalyzes the phosphorylation of D-tagatose-1-phosphate (Tag-1P) to D-tagatose-1,6-bisphosphate. Can also use D-fructose-1-phosphate, with 40-fold lower catalytic efficiency, but not tagatose-6-phosphate or fructose-6-phosphate. The substrate, which occurs in a pyranose form in solution, may undergo a change to the furanose conformation after binding to the enzyme, in order to permit phosphorylation at C-6. The chain is D-tagatose-1-phosphate kinase from Bacillus licheniformis (strain ATCC 14580 / DSM 13 / JCM 2505 / CCUG 7422 / NBRC 12200 / NCIMB 9375 / NCTC 10341 / NRRL NRS-1264 / Gibson 46).